The chain runs to 144 residues: 3-hydroxyacyl-[acyl-carrier-protein] dehydratase FabZ (144 aa).

The active site involves histidine 51.

Belongs to the thioester dehydratase family. FabZ subfamily.

The protein localises to the cytoplasm. The enzyme catalyses a (3R)-hydroxyacyl-[ACP] = a (2E)-enoyl-[ACP] + H2O. Involved in unsaturated fatty acids biosynthesis. Catalyzes the dehydration of short chain beta-hydroxyacyl-ACPs and long chain saturated and unsaturated beta-hydroxyacyl-ACPs. This Lactococcus lactis subsp. cremoris (strain SK11) protein is 3-hydroxyacyl-[acyl-carrier-protein] dehydratase FabZ.